Consider the following 227-residue polypeptide: Translation initiation factor 6 (227 aa).

The protein belongs to the eIF-6 family.

Functionally, binds to the 50S ribosomal subunit and prevents its association with the 30S ribosomal subunit to form the 70S initiation complex. In Pyrococcus horikoshii (strain ATCC 700860 / DSM 12428 / JCM 9974 / NBRC 100139 / OT-3), this protein is Translation initiation factor 6.